The chain runs to 1454 residues: Beta-1,3-glucan-binding protein (1454 aa).

The propeptide occupies 1–197; the sequence is MSFDLTTPFD…KRSLEMRMMN (197 aa). Asn-33, Asn-55, Asn-185, Asn-571, Asn-592, Asn-825, Asn-882, and Asn-1153 each carry an N-linked (GlcNAc...) asparagine glycan.

Belongs to the glycosyl hydrolase 16 family. As to quaternary structure, monomer. As to expression, expressed in the hepatopancreas and secreted into the hemolymph. Expressed at lower levels in muscle, pleopod and gill tissue.

It is found in the secreted. Its function is as follows. Involved in the recognition of invading microorganisms. Binds specifically to beta-1,3-glucan and activates the prophenoloxidase cascade. The polypeptide is Beta-1,3-glucan-binding protein (Penaeus vannamei (Whiteleg shrimp)).